The sequence spans 479 residues: Sodium-coupled neutral amino acid transporter 5 (479 aa).

The Cytoplasmic segment spans residues 1–58; sequence MAISCAVGMEMQEPKMNGTLSTGAAAGYRQEREGFLPTTHGPAPGRKPVQFLDFEGKT. A helical transmembrane segment spans residues 59 to 81; sequence SFGMSVFNLSNAIMGSGILGLAY. At 82–97 the chain is on the extracellular side; sequence AMAHTGVIFFLALLLC. Residues 98 to 118 traverse the membrane as a helical segment; that stretch reads IALLSSYSIHLLLTCASVVGI. The Cytoplasmic portion of the chain corresponds to 119–135; sequence RAYEQLGQRAFGPAGKV. Residues 136–156 traverse the membrane as a helical segment; the sequence is VVAIIICLHNVGAMSSYLFII. Over 157 to 176 the chain is Extracellular; sequence KSELPLVIGTFLHMDPEGDW. Residues 177 to 197 form a helical membrane-spanning segment; sequence FLKGNLLIILVSLLIILPLAL. At 198 to 202 the chain is on the cytoplasmic side; it reads MKHLG. Residues 203–223 form a helical membrane-spanning segment; sequence YLGYTSSLSLTCMLFFLISVI. The Extracellular segment spans residues 224-264; it reads YKKFQLGCVVSHNDTVVESEPAPLQAFNSSCEAKLFTVDSQ. The cysteines at positions 231 and 254 are disulfide-linked. Residue N236 is glycosylated (N-linked (GlcNAc...) asparagine). Residues 265–285 form a helical membrane-spanning segment; the sequence is MSYTVPIMAFAFVCHPEVLPI. Over 286–302 the chain is Cytoplasmic; sequence YTELCCPTQRRMQAVAN. Residues 303–323 traverse the membrane as a helical segment; it reads MSIGAMFIMYGLTATFGYLTF. Topologically, residues 324 to 341 are extracellular; it reads YSTVKAEMLEMYTQEDLL. Residues 342 to 362 traverse the membrane as a helical segment; that stretch reads ILCVRLAVLLAVTLTVPVVLF. At 363–383 the chain is on the cytoplasmic side; it reads PIRRALQQLLFPSKAFSWPRH. A helical transmembrane segment spans residues 384–404; it reads VAIALILLILVNILVICVPTI. The Extracellular portion of the chain corresponds to 405–406; sequence RD. Residues 407 to 427 form a helical membrane-spanning segment; that stretch reads IFGFIGSTSAPSLIFILPSVF. The Cytoplasmic segment spans residues 428–446; the sequence is YLRIVPADMEPLFSWPKIQ. Residues 447 to 467 traverse the membrane as a helical segment; it reads ALCFGVLGVLFMAISLGFMFA. At 468-479 the chain is on the extracellular side; the sequence is NWATGQSRMSGH.

The protein belongs to the amino acid/polyamine transporter 2 family. Highly expressed in neocortex, hippocampus, striatum and spinal cord by astrocytes (at protein level). Expressed in brain, lung, stomach, kidney, spleen and testis. Expressed in the cerebral cortex between the second and third postnatal week, where expressed exclusively in glial cells from postnatal day 14 to adulthood (at protein level). Expressed in the cerebellum at post natal day 12 (P12). Expressed in liver. Expressed inside the cell body of the astrocytes.

Its subcellular location is the cell membrane. The catalysed reaction is L-serine(out) + Na(+)(out) + H(+)(in) = L-serine(in) + Na(+)(in) + H(+)(out). It catalyses the reaction L-alanine(out) + Na(+)(out) + H(+)(in) = L-alanine(in) + Na(+)(in) + H(+)(out). The enzyme catalyses glycine(out) + Na(+)(out) + H(+)(in) = glycine(in) + Na(+)(in) + H(+)(out). It carries out the reaction L-glutamine(out) + Na(+)(out) + H(+)(in) = L-glutamine(in) + Na(+)(in) + H(+)(out). The catalysed reaction is L-asparagine(out) + Na(+)(out) + H(+)(in) = L-asparagine(in) + Na(+)(in) + H(+)(out). It catalyses the reaction L-histidine(out) + Na(+)(out) + H(+)(in) = L-histidine(in) + Na(+)(in) + H(+)(out). The enzyme catalyses L-cysteine(out) + Na(+)(out) + H(+)(in) = L-cysteine(in) + Na(+)(in) + H(+)(out). With respect to regulation, not inhibited by lithium. Partial allosteric regulation on ions sodium binding. In terms of biological role, symporter that cotransports neutral amino acids and sodium ions, coupled to an H(+) antiporter activity. Releases L-glutamine and glycine from astroglial cells and may participate in the glutamate/GABA-glutamine cycle and the NMDA receptors activation. In addition contributes significantly to L-glutamine uptake in retina, namely in ganglion and Mueller cells and, therefore participates in the retinal glutamate-glutamine cycle. The transport activity is pH sensitive, Li(+) tolerant, bidirectional and associated with large uncoupled fluxes of protons. The transport is electroneutral coupled to the cotransport of 1 Na(+) and the antiport of 1 H(+). May have particular importance for modulation of net hepatic glutamine flux. In Rattus norvegicus (Rat), this protein is Sodium-coupled neutral amino acid transporter 5.